The sequence spans 291 residues: 4-hydroxy-tetrahydrodipicolinate synthase (291 aa).

Position 42 (Thr-42) interacts with pyruvate. Residue Tyr-129 is the Proton donor/acceptor of the active site. Residue Lys-157 is the Schiff-base intermediate with substrate of the active site. Ile-198 provides a ligand contact to pyruvate.

The protein belongs to the DapA family. In terms of assembly, homotetramer; dimer of dimers.

It is found in the cytoplasm. It carries out the reaction L-aspartate 4-semialdehyde + pyruvate = (2S,4S)-4-hydroxy-2,3,4,5-tetrahydrodipicolinate + H2O + H(+). Its pathway is amino-acid biosynthesis; L-lysine biosynthesis via DAP pathway; (S)-tetrahydrodipicolinate from L-aspartate: step 3/4. Its function is as follows. Catalyzes the condensation of (S)-aspartate-beta-semialdehyde [(S)-ASA] and pyruvate to 4-hydroxy-tetrahydrodipicolinate (HTPA). This is 4-hydroxy-tetrahydrodipicolinate synthase from Chlamydia pneumoniae (Chlamydophila pneumoniae).